Here is a 445-residue protein sequence, read N- to C-terminus: Reticulon-4 receptor-like 1 (445 aa).

The signal sequence occupies residues 1 to 24 (MLRKGCCVELLLLLLAGELPLSGG). An LRRNT domain is found at 25-54 (CPRDCVCYPSPMTVSCQAHNFAAIPEGIPE). LRR repeat units follow at residues 55–76 (DSER…HFSP), 77–98 (AMVT…TFEG), 101–123 (HLEE…TFQG), 126–147 (KLHA…IFGG), 150–171 (SLQY…IFVD), 174–195 (NLSH…IFRG), 198–219 (NLDR…AFHD), and 222–243 (RLTT…CLAP). The LRRCT domain maps to 255 to 306 (NAWDCGCRARSLWEWLRRFRGSSSVVPCATPELRQGQDLKSLRVEDFRNCTG). Disordered regions lie at residues 304–380 (CTGP…ELPE) and 401–421 (RPKR…SGVQ). Basic residues-rich tracts occupy residues 352 to 366 (GSKK…HRNR) and 401 to 413 (RPKR…RRTP). Residue serine 424 is the site of GPI-anchor amidated serine attachment. A helical membrane pass occupies residues 424 to 444 (SSGTALGVSLLAWILGLVVSL). A propeptide spans 425 to 445 (SGTALGVSLLAWILGLVVSLR) (removed in mature form).

It belongs to the Nogo receptor family. Identified in a complex that contains RTN4R, RTN4RL1 and NGFR; the interaction depends on the presence of chondroitin sulfate proteoglycans. Does not interact with MAG, OMG and RTN4. In terms of tissue distribution, detected in brain (at protein level). Expressed in various regions of the brain, including the cerebral cortex, hippocampus, striatum, thalamus and cerebellum.

The protein localises to the cell membrane. The protein resides in the membrane raft. Its subcellular location is the perikaryon. It localises to the cell projection. Its function is as follows. Cell surface receptor. Plays a functionally redundant role in postnatal brain development and in regulating axon regeneration in the adult central nervous system. Contributes to normal axon migration across the brain midline and normal formation of the corpus callosum. Protects motoneurons against apoptosis; protection against apoptosis is probably mediated by MAG. Plays a role in inhibiting neurite outgrowth and axon regeneration via its binding to neuronal chondroitin sulfate proteoglycans. Binds heparin. Like other family members, plays a role in restricting the number dendritic spines and the number of synapses that are formed during brain development. Signaling mediates activation of Rho and downstream reorganization of the actin cytoskeleton. The protein is Reticulon-4 receptor-like 1 of Rattus norvegicus (Rat).